The chain runs to 138 residues: Small ribosomal subunit protein uS11c (138 aa).

Positions 1 to 23 are disordered; that stretch reads MAKPILRIGSRKNTRSSSRKNVR. Positions 9–23 are enriched in basic residues; that stretch reads GSRKNTRSSSRKNVR.

This sequence belongs to the universal ribosomal protein uS11 family. In terms of assembly, part of the 30S ribosomal subunit.

The protein resides in the plastid. It localises to the chloroplast. The protein is Small ribosomal subunit protein uS11c of Nasturtium officinale (Watercress).